The following is a 587-amino-acid chain: Probable pectinesterase/pectinesterase inhibitor 61 (587 aa).

Residues 1 to 23 (MGYDRLGPSGPSNPNQKDPATSL) are disordered. Over residues 10-19 (GPSNPNQKDP) the composition is skewed to polar residues. The chain crosses the membrane as a helical span at residues 35–55 (ILFTLAVLVVGVVCFGIFAGI). The segment at 69–223 (RKPTQAISRT…SEMVSNCLAI (155 aa)) is pectinesterase inhibitor 61. Positions 273-571 (DITVSKDGSG…FTVAQFISGS (299 aa)) are pectinesterase 61. 2 residues coordinate substrate: Thr349 and Gln379. Catalysis depends on Asp402, which acts as the Proton donor; for pectinesterase activity. Cysteines 416 and 436 form a disulfide. The Nucleophile; for pectinesterase activity role is filled by Asp423. Substrate-binding residues include Arg491 and Trp493.

This sequence in the N-terminal section; belongs to the PMEI family. The protein in the C-terminal section; belongs to the pectinesterase family. Expressed in siliques, floral stems and rosettes leaves.

It is found in the membrane. It carries out the reaction [(1-&gt;4)-alpha-D-galacturonosyl methyl ester](n) + n H2O = [(1-&gt;4)-alpha-D-galacturonosyl](n) + n methanol + n H(+). Its pathway is glycan metabolism; pectin degradation; 2-dehydro-3-deoxy-D-gluconate from pectin: step 1/5. Acts in the modification of cell walls via demethylesterification of cell wall pectin. This chain is Probable pectinesterase/pectinesterase inhibitor 61 (PME61), found in Arabidopsis thaliana (Mouse-ear cress).